Here is a 422-residue protein sequence, read N- to C-terminus: 4-hydroxy-3-methylbut-2-en-1-yl diphosphate synthase (flavodoxin) (422 aa).

Residues Cys-316, Cys-319, Cys-362, and Glu-369 each contribute to the [4Fe-4S] cluster site.

Belongs to the IspG family. Requires [4Fe-4S] cluster as cofactor.

It carries out the reaction (2E)-4-hydroxy-3-methylbut-2-enyl diphosphate + oxidized [flavodoxin] + H2O + 2 H(+) = 2-C-methyl-D-erythritol 2,4-cyclic diphosphate + reduced [flavodoxin]. It participates in isoprenoid biosynthesis; isopentenyl diphosphate biosynthesis via DXP pathway; isopentenyl diphosphate from 1-deoxy-D-xylulose 5-phosphate: step 5/6. In terms of biological role, converts 2C-methyl-D-erythritol 2,4-cyclodiphosphate (ME-2,4cPP) into 1-hydroxy-2-methyl-2-(E)-butenyl 4-diphosphate. The polypeptide is 4-hydroxy-3-methylbut-2-en-1-yl diphosphate synthase (flavodoxin) (Ehrlichia ruminantium (strain Welgevonden)).